A 175-amino-acid polypeptide reads, in one-letter code: Large ribosomal subunit protein uL10 (175 aa).

This sequence belongs to the universal ribosomal protein uL10 family. Part of the ribosomal stalk of the 50S ribosomal subunit. The N-terminus interacts with L11 and the large rRNA to form the base of the stalk. The C-terminus forms an elongated spine to which L12 dimers bind in a sequential fashion forming a multimeric L10(L12)X complex.

Functionally, forms part of the ribosomal stalk, playing a central role in the interaction of the ribosome with GTP-bound translation factors. In Prochlorococcus marinus (strain SARG / CCMP1375 / SS120), this protein is Large ribosomal subunit protein uL10.